Here is a 563-residue protein sequence, read N- to C-terminus: Eukaryotic translation initiation factor 3 subunit D-1 (563 aa).

The interval 98 to 167 is disordered; the sequence is VQKPPHQRGR…GPPPKMRESS (70 aa). Positions 100 to 121 are enriched in basic residues; sequence KPPHQRGRFRNMRNSRSGRGRN. Position 128 is a phosphothreonine (Thr128). The segment at 291–305 is RNA gate; sequence EFDLLTVNESSVEPP.

It belongs to the eIF-3 subunit D family. Component of the eukaryotic translation initiation factor 3 (eIF-3) complex. The eIF-3 complex interacts with pix.

It localises to the cytoplasm. MRNA cap-binding component of the eukaryotic translation initiation factor 3 (eIF-3) complex, which is involved in protein synthesis of a specialized repertoire of mRNAs and, together with other initiation factors, stimulates binding of mRNA and methionyl-tRNAi to the 40S ribosome. The eIF-3 complex specifically targets and initiates translation of a subset of mRNAs involved in cell proliferation. In the eIF-3 complex, eif3d specifically recognizes and binds the 7-methylguanosine cap of a subset of mRNAs. The sequence is that of Eukaryotic translation initiation factor 3 subunit D-1 from Drosophila grimshawi (Hawaiian fruit fly).